Consider the following 218-residue polypeptide: MAAPRISFSPSDILFGVLDRLFKDNATGKVLASRVAVVILLFIMAIVWYRGDSFFEYYKQSKYETYSEIIEKERTARFESVALEQLQIVHISSEADFSAVYSFRPKNLNYFVDIIAYEGKLPSTISEKSLGGYPVDKTMDEYTVHLNGRHYYSNSKFAFLPTKKPTPEINYMYSCPYFNLDNIYAGTITMYWYRNDHISNDRLESICAQAARILGRAK.

Residues 1–34 are Cytoplasmic-facing; it reads MAAPRISFSPSDILFGVLDRLFKDNATGKVLASR. Residues 35-49 traverse the membrane as a helical; Signal-anchor for type II membrane protein segment; the sequence is VAVVILLFIMAIVWY. Topologically, residues 50–218 are periplasmic; that stretch reads RGDSFFEYYK…QAARILGRAK (169 aa). Residues cysteine 175 and cysteine 207 are joined by a disulfide bond.

The protein belongs to the T4likevirus holin family. As to quaternary structure, homomultimer. Heterotetramer composed of 2 holin and 2 antiholin. The holin-antiholin complex binds dsDNA. Interacts (via C-terminus) with antiholin (via C-terminus); this interaction blocks the holin homomultimerization and delays host cell lysis. Interacts (via N-terminus) with the lysis inhibition accessory protein rIII; this interaction stabilizes the holin-antiholin complex thereby resulting in a robust block of the hole formation. Disulfide bond is required for functionality.

It is found in the host cell inner membrane. Accumulates harmlessly in the cytoplasmic membrane until it reaches a critical concentration that triggers the formation of micron-scale pores (holes) causing host cell membrane disruption and endolysin escape into the periplasmic space. Determines the precise timing of host cell lysis. Regulated by specific antiholins that somehow sense superinfections and then delay lysis. Participates with the endolysin and spanin proteins in the sequential events which lead to the programmed host cell lysis releasing the mature viral particles from the host cell. The chain is Holin (t) from Escherichia coli (Bacteriophage T4).